The sequence spans 340 residues: Chitinase 2 (340 aa).

The N-terminal stretch at 1-32 (MSTPRAAASLAKKAALVALAVLAAALATAARA) is a signal peptide. The Chitin-binding type-1 domain occupies 33–73 (EQCGAQAGGARCPNCLCCSRWGWCGTTSDFCGDGCQSQCSG). Cystine bridges form between C35–C50, C44–C56, C47–C74, C49–C63, C67–C71, C110–C172, C184–C192, and C291–C323. Catalysis depends on E154, which acts as the Proton donor.

Belongs to the glycosyl hydrolase 19 family. Chitinase class I subfamily. Expressed in roots, sheaths and meristems.

It catalyses the reaction Random endo-hydrolysis of N-acetyl-beta-D-glucosaminide (1-&gt;4)-beta-linkages in chitin and chitodextrins.. Its function is as follows. Hydrolyzes chitin and plays a role in defense against fungal pathogens containing chitin. Its overexpression confers enhanced resistance to sheath blight pathogen (R.solani). This is Chitinase 2 (Cht2) from Oryza sativa subsp. japonica (Rice).